A 426-amino-acid chain; its full sequence is Cell adhesion molecule CEACAM16 (426 aa).

Positions 1–22 (MKMPLTWYSWFLLSAWILNTGA) are cleaved as a signal peptide. Asparagine 38 carries an N-linked (GlcNAc...) asparagine glycan. The interval 77 to 96 (ETPGPAHTGREAVRPDGSLD) is disordered. The segment covering 84 to 95 (TGREAVRPDGSL) has biased composition (basic and acidic residues). Ig-like C2-type domains are found at residues 134–219 (PPTV…LNLT) and 224–310 (PERV…ASVV). Cysteine 155 and cysteine 202 are oxidised to a cystine. An N-linked (GlcNAc...) asparagine glycan is attached at asparagine 217. Cysteine 253 and cysteine 294 form a disulfide bridge.

This sequence belongs to the immunoglobulin superfamily. CEA family. Homooligomer; can for homodimers and homotetramers. Interacts with TECTA and TECTB. Expressed in cochlear outer hair cells (OHC).

It is found in the secreted. Its function is as follows. Required for proper hearing, plays a role in maintaining the integrity of the tectorial membrane. This Mus musculus (Mouse) protein is Cell adhesion molecule CEACAM16.